Consider the following 277-residue polypeptide: Probable cyclic nucleotide phosphodiesterase MCR_0369 (277 aa).

Residues D17, H19, D53, N83, H165, H204, and H206 each contribute to the Fe cation site. Residues H19, D53, and 83 to 84 each bind AMP; that span reads NH. H206 lines the AMP pocket.

This sequence belongs to the cyclic nucleotide phosphodiesterase class-III family. Fe(2+) is required as a cofactor.

In Moraxella catarrhalis (strain BBH18), this protein is Probable cyclic nucleotide phosphodiesterase MCR_0369.